Here is a 240-residue protein sequence, read N- to C-terminus: Pyridoxine 5'-phosphate synthase (240 aa).

Position 7 (N7) interacts with 3-amino-2-oxopropyl phosphate. Residue 9 to 10 (DH) coordinates 1-deoxy-D-xylulose 5-phosphate. Residue R18 coordinates 3-amino-2-oxopropyl phosphate. H43 acts as the Proton acceptor in catalysis. The 1-deoxy-D-xylulose 5-phosphate site is built by R45 and H50. The Proton acceptor role is filled by E70. Residue T100 coordinates 1-deoxy-D-xylulose 5-phosphate. H191 (proton donor) is an active-site residue. 3-amino-2-oxopropyl phosphate is bound by residues G192 and 213–214 (GH).

It belongs to the PNP synthase family. As to quaternary structure, homooctamer; tetramer of dimers.

The protein localises to the cytoplasm. The catalysed reaction is 3-amino-2-oxopropyl phosphate + 1-deoxy-D-xylulose 5-phosphate = pyridoxine 5'-phosphate + phosphate + 2 H2O + H(+). Its pathway is cofactor biosynthesis; pyridoxine 5'-phosphate biosynthesis; pyridoxine 5'-phosphate from D-erythrose 4-phosphate: step 5/5. Functionally, catalyzes the complicated ring closure reaction between the two acyclic compounds 1-deoxy-D-xylulose-5-phosphate (DXP) and 3-amino-2-oxopropyl phosphate (1-amino-acetone-3-phosphate or AAP) to form pyridoxine 5'-phosphate (PNP) and inorganic phosphate. The chain is Pyridoxine 5'-phosphate synthase from Synechococcus elongatus (strain ATCC 33912 / PCC 7942 / FACHB-805) (Anacystis nidulans R2).